Here is a 165-residue protein sequence, read N- to C-terminus: Chaperone protein SicA (165 aa).

The protein belongs to the LcrH/SycD chaperone family. Dimer or higher-order oligomers.

The protein resides in the cytoplasm. Functionally, type III secretion-associated chaperone required for SipB and SipC stabilization. Prevents premature association of SipB with SipC, which may lead to their targeting for degradation. Along with InvF, required for transcription activation of sigDE (sopB pipC), sicAsipBCDA, and sopE. In Salmonella dublin, this protein is Chaperone protein SicA (sicA).